We begin with the raw amino-acid sequence, 241 residues long: Small ribosomal subunit protein uS3 (241 aa).

The 69-residue stretch at Ile39–Arg107 folds into the KH type-2 domain. A disordered region spans residues Ala214–Ala241.

The protein belongs to the universal ribosomal protein uS3 family. In terms of assembly, part of the 30S ribosomal subunit. Forms a tight complex with proteins S10 and S14.

Binds the lower part of the 30S subunit head. Binds mRNA in the 70S ribosome, positioning it for translation. The protein is Small ribosomal subunit protein uS3 of Mesorhizobium japonicum (strain LMG 29417 / CECT 9101 / MAFF 303099) (Mesorhizobium loti (strain MAFF 303099)).